Reading from the N-terminus, the 237-residue chain is Nodulation protein NolA (237 aa).

An HTH merR-type domain is found at 10 to 79 (RWRIGELAGA…LQEIRRAMDG (70 aa)). Residues 13–32 (IGELAGATGVTVRTLHHYEH) constitute a DNA-binding region (H-T-H motif).

Involved in genotype-specific nodulation of soybeans. The protein is Nodulation protein NolA (nolA) of Bradyrhizobium sp. (strain NC92).